A 379-amino-acid chain; its full sequence is Alcohol dehydrogenase class-2 isozyme 2 (379 aa).

Zn(2+) contacts are provided by Cys-47, His-69, Cys-99, Cys-102, Cys-105, Cys-113, and Cys-176. NAD(+)-binding positions include 205 to 210 (GLGGVG), Asp-229, Lys-234, 298 to 300 (VGV), and Arg-374.

The protein belongs to the zinc-containing alcohol dehydrogenase family. Class-II subfamily. As to quaternary structure, homodimer. Requires Zn(2+) as cofactor.

It is found in the cytoplasm. The enzyme catalyses a primary alcohol + NAD(+) = an aldehyde + NADH + H(+). It catalyses the reaction a secondary alcohol + NAD(+) = a ketone + NADH + H(+). The chain is Alcohol dehydrogenase class-2 isozyme 2 (ADH2-2) from Oryctolagus cuniculus (Rabbit).